Here is a 258-residue protein sequence, read N- to C-terminus: tRNA pseudouridine synthase A (258 aa).

The Nucleophile role is filled by Asp-53. Tyr-111 contributes to the substrate binding site.

Belongs to the tRNA pseudouridine synthase TruA family. Homodimer.

It carries out the reaction uridine(38/39/40) in tRNA = pseudouridine(38/39/40) in tRNA. Functionally, formation of pseudouridine at positions 38, 39 and 40 in the anticodon stem and loop of transfer RNAs. This chain is tRNA pseudouridine synthase A, found in Streptococcus agalactiae serotype Ia (strain ATCC 27591 / A909 / CDC SS700).